The sequence spans 147 residues: METLITISRWLAKQHVVTWCVQQEGELWCANAFYLFDAQKVAFYILTEEKTRHAQMSGPQAAVAGTVNGQPKTVALIRGVQFKGEIRRLEGEESDLARQAYNRRFPVARMLSAPVWEIRLDEIKFTDNTLGFGKKMIWLRDSGTEQA.

Belongs to the UPF0306 family.

The sequence is that of UPF0306 protein YhbP from Shigella sonnei (strain Ss046).